A 459-amino-acid chain; its full sequence is Ribulose bisphosphate carboxylase large chain (459 aa).

An N6,N6,N6-trimethyllysine modification is found at K4. 2 residues coordinate substrate: N113 and T163. K165 acts as the Proton acceptor in catalysis. K167 serves as a coordination point for substrate. Residues K191, D193, and E194 each contribute to the Mg(2+) site. N6-carboxylysine is present on K191. Catalysis depends on H284, which acts as the Proton acceptor. Substrate-binding residues include R285, H317, and S369.

It belongs to the RuBisCO large chain family. Type I subfamily. Heterohexadecamer of 8 large chains and 8 small chains; disulfide-linked. The disulfide link is formed within the large subunit homodimers. Requires Mg(2+) as cofactor. In terms of processing, the disulfide bond which can form in the large chain dimeric partners within the hexadecamer appears to be associated with oxidative stress and protein turnover.

It is found in the plastid. It localises to the chloroplast. It carries out the reaction 2 (2R)-3-phosphoglycerate + 2 H(+) = D-ribulose 1,5-bisphosphate + CO2 + H2O. The enzyme catalyses D-ribulose 1,5-bisphosphate + O2 = 2-phosphoglycolate + (2R)-3-phosphoglycerate + 2 H(+). In terms of biological role, ruBisCO catalyzes two reactions: the carboxylation of D-ribulose 1,5-bisphosphate, the primary event in carbon dioxide fixation, as well as the oxidative fragmentation of the pentose substrate in the photorespiration process. Both reactions occur simultaneously and in competition at the same active site. The chain is Ribulose bisphosphate carboxylase large chain from Parnassia fimbriata (Fringed grass-of-Parnassus).